The sequence spans 553 residues: Neutral amino acid transporter B(0) (553 aa).

M1 carries the post-translational modification N-acetylmethionine. The Cytoplasmic portion of the chain corresponds to 1–50 (MAVDPPKADPKGVAVDSSRRCPALGSREDQSAKAGGCCGSRDRVRRCIRA). Residues 51–80 (NLLVLLTVAAVVAGVGLGLGVSAAGGADAL) traverse the membrane as a helical segment. Over 81-93 (GPARLTRFAFPGE) the chain is Extracellular. The chain crosses the membrane as a helical span at residues 94–115 (LLLRLLKMIILPLVVCSLIGGA). The Cytoplasmic portion of the chain corresponds to 116–129 (ASLDPSALGRVGAW). A helical membrane pass occupies residues 130–152 (ALLFFLVTTLLASALGVGLALAL). Over 153–236 (KPGAAVTAIT…INSTMVQLLC (84 aa)) the chain is Extracellular. 2 N-linked (GlcNAc...) asparagine glycosylation sites follow: N165 and N228. Residues 237 to 260 (EVEGMNILGLVVFAIVFGVALRKL) traverse the membrane as a helical segment. Residues 261-269 (GPEGELLIR) lie on the Cytoplasmic side of the membrane. Residues 270–297 (FFNSFNDATMVLVSWIMWYAPVGILFLV) form a helical membrane-spanning segment. Residues 298–318 (ASKIVEMKDVRQLFISLGKYI) are Extracellular-facing. The helical transmembrane segment at 319–340 (LCCLLGHAIHGLLVLPLIYFLF) threads the bilayer. The Cytoplasmic portion of the chain corresponds to 341–345 (TRKNP). The discontinuously helical intramembrane region spans 346 to 376 (YRFLWGIMTPLATAFGTSSSSATLPLMMKCV). Topologically, residues 377–385 (EEKNGVAKH) are cytoplasmic. A helical membrane pass occupies residues 386–412 (ISRFILPIGATVNMDGAALFQCVAAVF). Residues G394, T396, and N398 each coordinate Na(+). Topologically, residues 413 to 425 (IAQLNGVSLDFVK) are extracellular. The segment at residues 426–459 (IITILVTATASSVGAAGIPAGGVLTLAIILEAVS) is an intramembrane region (discontinuously helical). Topologically, residues 460–472 (LPVKDISLILAVD) are extracellular. The chain crosses the membrane as a helical span at residues 473–494 (WLVDRSCTVLNVEGDAFGAGLL). Residues N483 and D487 each coordinate Na(+). Residues 495–553 (QSYVDRTKMPSSEPELIQVKNEVSLNPLPLATEEGNPLLKQYQGPTGDSSATFEKESVM) lie on the Cytoplasmic side of the membrane. Phosphoserine occurs at positions 505, 506, 518, 543, and 551. The disordered stretch occupies residues 531–553 (PLLKQYQGPTGDSSATFEKESVM). Residues 537-546 (QGPTGDSSAT) show a composition bias toward polar residues.

This sequence belongs to the dicarboxylate/amino acid:cation symporter (DAACS) (TC 2.A.23) family. SLC1A5 subfamily. Homotrimer. Highly expressed in adipose tissue. Detected in lung, skeletal muscle, large intestine, kidney and testis. Expressed in lung, brain, kidney and neural retina (at protein level). Expressed in Mueller cells (at protein level).

Its subcellular location is the cell membrane. It localises to the melanosome. It catalyses the reaction L-glutamine(out) + L-serine(in) + Na(+)(out) = L-glutamine(in) + L-serine(out) + Na(+)(in). It carries out the reaction L-glutamine(in) + L-serine(out) + Na(+)(out) = L-glutamine(out) + L-serine(in) + Na(+)(in). The enzyme catalyses L-threonine(in) + L-glutamine(out) + Na(+)(out) = L-threonine(out) + L-glutamine(in) + Na(+)(in). The catalysed reaction is L-threonine(out) + L-glutamine(in) + Na(+)(out) = L-threonine(in) + L-glutamine(out) + Na(+)(in). It catalyses the reaction L-asparagine(in) + L-glutamine(out) + Na(+)(out) = L-asparagine(out) + L-glutamine(in) + Na(+)(in). It carries out the reaction L-asparagine(out) + L-glutamine(in) + Na(+)(out) = L-asparagine(in) + L-glutamine(out) + Na(+)(in). The enzyme catalyses L-glutamine(in) + L-alanine(out) + Na(+)(out) = L-glutamine(out) + L-alanine(in) + Na(+)(in). The catalysed reaction is L-valine(out) + L-glutamine(in) + Na(+)(out) = L-valine(in) + L-glutamine(out) + Na(+)(in). It catalyses the reaction L-glutamine(in) + L-methionine(out) + Na(+)(out) = L-glutamine(out) + L-methionine(in) + Na(+)(in). It carries out the reaction L-glutamine(in) + L-glutamate(out) + Na(+)(out) + H(+)(out) = L-glutamine(out) + L-glutamate(in) + Na(+)(in) + H(+)(in). The enzyme catalyses D-serine(in) + L-glutamine(out) + Na(+)(out) = D-serine(out) + L-glutamine(in) + Na(+)(in). The catalysed reaction is D-serine(in) + L-alanine(out) + Na(+)(out) = D-serine(out) + L-alanine(in) + Na(+)(in). It catalyses the reaction nitrate(in) = nitrate(out). It carries out the reaction iodide(out) = iodide(in). The enzyme catalyses thiocyanate(in) = thiocyanate(out). Down-regulated at acidic pH, with the exception of L-glutamate transport which is up-regulated instead. Sodium-coupled antiporter of neutral amino acids. In a tri-substrate transport cycle, exchanges neutral amino acids between the extracellular and intracellular compartments, coupled to the inward cotransport of at least one sodium ion. The preferred substrate is the essential amino acid L-glutamine, a precursor for biosynthesis of proteins, nucleotides and amine sugars as well as an alternative fuel for mitochondrial oxidative phosphorylation. Exchanges L-glutamine with other neutral amino acids such as L-serine, L-threonine and L-asparagine in a bidirectional way. Provides L-glutamine to proliferating stem and activated cells driving the metabolic switch toward cell differentiation. The transport cycle is usually pH-independent, with the exception of L-glutamate. Transports extracellular L-glutamate coupled to the cotransport of one proton and one sodium ion in exchange for intracellular L-glutamine counter-ion. May provide for L-glutamate uptake in glial cells regulating glutamine/glutamate cycle in the nervous system. Can transport D-amino acids. Mediates D-serine release from the retinal glia potentially affecting NMDA receptor function in retinal neurons. Displays sodium- and amino acid-dependent but uncoupled channel-like anion conductance with a preference SCN(-) &gt;&gt; NO3(-) &gt; I(-) &gt; Cl(-). Through binding of the fusogenic protein syncytin-1/ERVW-1 may mediate trophoblasts syncytialization, the spontaneous fusion of their plasma membranes, an essential process in placental development. This Mus musculus (Mouse) protein is Neutral amino acid transporter B(0) (Slc1a5).